The sequence spans 282 residues: Bifunctional protein FolD (282 aa).

Residues 164–166 (GRS) and S189 contribute to the NADP(+) site.

This sequence belongs to the tetrahydrofolate dehydrogenase/cyclohydrolase family. As to quaternary structure, homodimer.

It carries out the reaction (6R)-5,10-methylene-5,6,7,8-tetrahydrofolate + NADP(+) = (6R)-5,10-methenyltetrahydrofolate + NADPH. The enzyme catalyses (6R)-5,10-methenyltetrahydrofolate + H2O = (6R)-10-formyltetrahydrofolate + H(+). The protein operates within one-carbon metabolism; tetrahydrofolate interconversion. In terms of biological role, catalyzes the oxidation of 5,10-methylenetetrahydrofolate to 5,10-methenyltetrahydrofolate and then the hydrolysis of 5,10-methenyltetrahydrofolate to 10-formyltetrahydrofolate. The polypeptide is Bifunctional protein FolD (Streptococcus suis (strain 98HAH33)).